The sequence spans 122 residues: Large ribosomal subunit protein uL14c (122 aa).

The protein belongs to the universal ribosomal protein uL14 family. As to quaternary structure, part of the 50S ribosomal subunit.

Its subcellular location is the plastid. It localises to the chloroplast. Binds to 23S rRNA. This Eucalyptus globulus subsp. globulus (Tasmanian blue gum) protein is Large ribosomal subunit protein uL14c.